Here is a 256-residue protein sequence, read N- to C-terminus: Thiazole synthase (256 aa).

Residue lysine 97 is the Schiff-base intermediate with DXP of the active site. Residues glycine 158, 184–185, and 206–207 each bind 1-deoxy-D-xylulose 5-phosphate; these read AG and NT.

It belongs to the ThiG family. In terms of assembly, homotetramer. Forms heterodimers with either ThiH or ThiS.

The protein resides in the cytoplasm. The enzyme catalyses [ThiS sulfur-carrier protein]-C-terminal-Gly-aminoethanethioate + 2-iminoacetate + 1-deoxy-D-xylulose 5-phosphate = [ThiS sulfur-carrier protein]-C-terminal Gly-Gly + 2-[(2R,5Z)-2-carboxy-4-methylthiazol-5(2H)-ylidene]ethyl phosphate + 2 H2O + H(+). Its pathway is cofactor biosynthesis; thiamine diphosphate biosynthesis. Catalyzes the rearrangement of 1-deoxy-D-xylulose 5-phosphate (DXP) to produce the thiazole phosphate moiety of thiamine. Sulfur is provided by the thiocarboxylate moiety of the carrier protein ThiS. In vitro, sulfur can be provided by H(2)S. The chain is Thiazole synthase from Flavobacterium psychrophilum (strain ATCC 49511 / DSM 21280 / CIP 103535 / JIP02/86).